The following is a 257-amino-acid chain: NAD kinase (257 aa).

The active-site Proton acceptor is aspartate 44. NAD(+) is bound by residues 44 to 45 (DG), arginine 49, 116 to 117 (NE), aspartate 146, alanine 154, and 157 to 162 (TAYNLS).

It belongs to the NAD kinase family. A divalent metal cation is required as a cofactor.

Its subcellular location is the cytoplasm. The catalysed reaction is NAD(+) + ATP = ADP + NADP(+) + H(+). Involved in the regulation of the intracellular balance of NAD and NADP, and is a key enzyme in the biosynthesis of NADP. Catalyzes specifically the phosphorylation on 2'-hydroxyl of the adenosine moiety of NAD to yield NADP. The protein is NAD kinase of Rhizorhabdus wittichii (strain DSM 6014 / CCUG 31198 / JCM 15750 / NBRC 105917 / EY 4224 / RW1) (Sphingomonas wittichii).